The following is a 375-amino-acid chain: Outer membrane porin OmpD (375 aa).

The signal sequence occupies residues 1–34 (MRKHAKKIIRIIKMKLKLVAVAVTSLLAAGVVNA).

Belongs to the Gram-negative porin family. Homotrimer. Mixed heterotrimers with other porins are also probable.

The protein localises to the cell outer membrane. Its function is as follows. Forms pores that allow passive diffusion of small molecules across the outer membrane. The chain is Outer membrane porin OmpD from Salmonella typhimurium (strain SL1344).